We begin with the raw amino-acid sequence, 288 residues long: Polyamine aminopropyltransferase (288 aa).

In terms of domain architecture, PABS spans 9-238 (ETLHDQFGQY…GIMTFAWATD (230 aa)). Gln33 provides a ligand contact to S-methyl-5'-thioadenosine. The spermidine site is built by His64 and Asp88. S-methyl-5'-thioadenosine contacts are provided by residues Glu108 and 140–141 (DG). The active-site Proton acceptor is Asp158. Position 158–161 (158–161 (DCTD)) interacts with spermidine. Pro165 is a binding site for S-methyl-5'-thioadenosine.

The protein belongs to the spermidine/spermine synthase family. As to quaternary structure, homodimer or homotetramer.

It localises to the cytoplasm. The catalysed reaction is S-adenosyl 3-(methylsulfanyl)propylamine + putrescine = S-methyl-5'-thioadenosine + spermidine + H(+). It participates in amine and polyamine biosynthesis; spermidine biosynthesis; spermidine from putrescine: step 1/1. In terms of biological role, catalyzes the irreversible transfer of a propylamine group from the amino donor S-adenosylmethioninamine (decarboxy-AdoMet) to putrescine (1,4-diaminobutane) to yield spermidine. This is Polyamine aminopropyltransferase from Shigella boydii serotype 4 (strain Sb227).